The following is a 116-amino-acid chain: L-amino-acid oxidase BjussuLAAO-II (116 aa).

42-45 (GPMR) contributes to the FAD binding site. The substrate site is built by Arg45 and His78.

The protein belongs to the flavin monoamine oxidase family. FIG1 subfamily. As to quaternary structure, homodimer; non-covalently linked. Requires FAD as cofactor. In terms of processing, glycosylated. In terms of tissue distribution, expressed by the venom gland.

It localises to the secreted. It catalyses the reaction an L-alpha-amino acid + O2 + H2O = a 2-oxocarboxylate + H2O2 + NH4(+). The enzyme catalyses L-leucine + O2 + H2O = 4-methyl-2-oxopentanoate + H2O2 + NH4(+). The catalysed reaction is L-phenylalanine + O2 + H2O = 3-phenylpyruvate + H2O2 + NH4(+). It carries out the reaction L-methionine + O2 + H2O = 4-methylsulfanyl-2-oxobutanoate + H2O2 + NH4(+). It catalyses the reaction L-isoleucine + O2 + H2O = (S)-3-methyl-2-oxopentanoate + H2O2 + NH4(+). The enzyme catalyses L-histidine + O2 + H2O = 3-(imidazol-5-yl)pyruvate + H2O2 + NH4(+). The catalysed reaction is L-tyrosine + O2 + H2O = 3-(4-hydroxyphenyl)pyruvate + H2O2 + NH4(+). It carries out the reaction L-tryptophan + O2 + H2O = indole-3-pyruvate + H2O2 + NH4(+). With respect to regulation, its enzymatic activities is reduced by the presence of Zn(2+), Al(3+), Cu(2+), Na(+) or Ni(2+) salts. Functionally, catalyzes an oxidative deamination of predominantly hydrophobic and aromatic L-amino acids, thus producing hydrogen peroxide that may contribute to the diverse toxic effects of this enzyme. Shows very high enzymatic activity on L-Met and L-Leu, high activity on L-Ile, L-Phe and L-Tyr and moderate activity on L-His. Exhibits diverse biological activities, such as hemorrhage, hemolysis, edema, apoptosis of vascular endothelial cells or tumor cell lines, and antibacterial, as well as regulation of platelet aggregation. Effects of snake L-amino oxidases on platelets are controversial, since they either induce aggregation or inhibit agonist-induced aggregation. These different effects are probably due to different experimental conditions. In vitro, has a strong antiprotozoal effect against Leishmania amazonensis (IC(50)=4.56 ug/mL) and Trypanosoma cruzi (IC(50)=4.85 ug/mL). It also causes cell death and DNA damage in hepatocarcinoma cells (HepG2) in vitro by inducing oxidative stress. It exerts cytotoxicity towards colorectal adenocarcinomahuman cells (Caco-2) by acting on multiple intracellular targets. It diminishes cell viability by decreasing mitochondrial activity, the activity of acid phosphatases, and lysosomal function. In addition, it increases intracellular levels of reactive oxygen species and DNA damage, it elevates the expression of the pro-inflammatory cytokine genes TNF and IL6, and lowers the expression of the apoptotic-related genes. Also induces cytotoxicity (IC(50)=1.80 ug/mL) and apoptosis in MCF-7 cells (a human breast adeno-carcinoma cell line) by activating the intrinsic and extrinsic apoptosis pathways, but are not cytotoxic towards MCF-10A cells (a non-tumorigenic human breast epithelial cell line). In Bothrops jararacussu (Jararacussu), this protein is L-amino-acid oxidase BjussuLAAO-II.